Here is a 366-residue protein sequence, read N- to C-terminus: Growth/differentiation factor 3 (366 aa).

An N-terminal signal peptide occupies residues 1–22; sequence MQPYQRLLALGFLLLTLPWGQT. A propeptide spanning residues 23 to 252 is cleaved from the precursor; the sequence is SEFQDSDLLQ…HCHPSSRKRR (230 aa). Residues N113 and N308 are each glycosylated (N-linked (GlcNAc...) asparagine). Cystine bridges form between C266–C331, C295–C363, and C299–C365.

It belongs to the TGF-beta family. Homodimer. Heterodimer (Potential). But, in contrast to other members of this family, cannot be disulfide-linked. In terms of processing, synthesized as large precursor molecule that undergo proteolytic cleavage, releasing the pro-domain from the active, receptor binding, C-terminal region of the molecule. In terms of tissue distribution, primarily in adult bone marrow, spleen, thymus and adipose tissue.

It is found in the secreted. The protein localises to the cytoplasm. Its function is as follows. Growth factor involved in early embryonic development and adipose-tissue homeostasis. During embryogenesis controls formation of anterior visceral endoderm and mesoderm and the establishment of anterior-posterior identity through a receptor complex comprising the receptor ACVR1B and the coreceptor CRIPTO. Regulates adipose-tissue homeostasis and energy balance under nutrient overload in part by signaling through the receptor complex based on ACVR1C and CRIPTO. The chain is Growth/differentiation factor 3 (Gdf3) from Mus musculus (Mouse).